The following is a 285-amino-acid chain: Pantothenate synthetase (285 aa).

30-37 (MGYLHEGH) is a binding site for ATP. Histidine 37 serves as the catalytic Proton donor. (R)-pantoate is bound at residue glutamine 61. Position 61 (glutamine 61) interacts with beta-alanine. 148-151 (GKKD) provides a ligand contact to ATP. Glutamine 154 provides a ligand contact to (R)-pantoate. ATP-binding positions include valine 177 and 185–188 (LSSR).

The protein belongs to the pantothenate synthetase family. As to quaternary structure, homodimer.

Its subcellular location is the cytoplasm. The catalysed reaction is (R)-pantoate + beta-alanine + ATP = (R)-pantothenate + AMP + diphosphate + H(+). Its pathway is cofactor biosynthesis; (R)-pantothenate biosynthesis; (R)-pantothenate from (R)-pantoate and beta-alanine: step 1/1. Functionally, catalyzes the condensation of pantoate with beta-alanine in an ATP-dependent reaction via a pantoyl-adenylate intermediate. In Leptospira interrogans serogroup Icterohaemorrhagiae serovar Lai (strain 56601), this protein is Pantothenate synthetase.